The sequence spans 220 residues: Zinc-finger homeodomain protein 2 (220 aa).

The segment covering 1–11 (MNFEDQEEDME) has biased composition (acidic residues). The interval 1-40 (MNFEDQEEDMEMSGVNPPCGYDSLSGEGATSSGGGGVGRS) is disordered. Residues 31–40 (SSGGGGVGRS) are compositionally biased toward gly residues. A ZF-HD dimerization-type zinc finger spans residues 49-98 (YRECLKNHAVNIGGHAVDGCCEFMPSGEDGTLDALKCAACGCHRNFHRKE). Positions 100–160 (ESIGGRAHRV…SSSGGTTKRF (61 aa)) are disordered. Residues 157–220 (TKRFRTKFTA…NNKNSLGKKP (64 aa)) constitute a DNA-binding region (homeobox; atypical).

In terms of assembly, homo or heterodimer. Interacts with ZHD1, ZHD3, ZHD4, ZHD5, ZHD6, ZHD7, ZHD8, ZHD9, ZHD10 and ZHD11. In terms of tissue distribution, mostly expressed in flowers and, to a lower extent, in inflorescence, stems and leaves.

It localises to the nucleus. Essential protein. Putative transcription factor. The chain is Zinc-finger homeodomain protein 2 (ZHD1) from Arabidopsis thaliana (Mouse-ear cress).